A 249-amino-acid polypeptide reads, in one-letter code: ATP synthase subunit a, chloroplastic (249 aa).

A run of 5 helical transmembrane segments spans residues 38–58 (GQVL…SVIA), 97–117 (VPFV…GALI), 136–156 (INTT…AGLS), 201–221 (LVVA…MMLL), and 222–242 (GLFT…AYIG).

The protein belongs to the ATPase A chain family. In terms of assembly, F-type ATPases have 2 components, CF(1) - the catalytic core - and CF(0) - the membrane proton channel. CF(1) has five subunits: alpha(3), beta(3), gamma(1), delta(1), epsilon(1). CF(0) has four main subunits: a, b, b' and c.

It is found in the plastid. It localises to the chloroplast thylakoid membrane. In terms of biological role, key component of the proton channel; it plays a direct role in the translocation of protons across the membrane. This Chlorokybus atmophyticus (Soil alga) protein is ATP synthase subunit a, chloroplastic.